Consider the following 368-residue polypeptide: RING finger protein 32 (368 aa).

The segment at arginine 45–tyrosine 82 is disordered. Residues cysteine 129–arginine 171 form an RING-type 1; atypical zinc finger. The IQ domain maps to arginine 188–proline 217. The RING-type 2; atypical zinc-finger motif lies at cysteine 295 to arginine 358.

It is found in the cytoplasm. In terms of biological role, may play a role in sperm formation. This Mus musculus (Mouse) protein is RING finger protein 32 (Rnf32).